The following is a 545-amino-acid chain: MSAKEVKFGVDARDRMLRGVEILNNAVKVTLGPKGRNVVLDKSYGAPRITKDGVTVAKEIELEDKFENMGAQMVREVASKSADAAGDGTTTATVLAAAIVKEGAKSVAAGMNPMDLKRGIDLAVEAVVADLVRNSKKVTSNEEIAQVGTISSNGDTEIGKFLADAMKKVGNEGVITVEEAKSLETELEIVEGMQFDRGYISPYFVTNADKMRVEMEDAYVLINEKKLSQLNELLPLLEAVVQSGKPLVIIAEDVEGEALATLVVNRLRGGLKVAAVKAPGFGDRRKAMLQDIAILTGGQAISEDLGIKLENVTLAMLGRAKKVMIDKENTTIVSGAGKKADIEARVNQIKAQIEETTSDYDREKLQERLAKLAGGVAVIRVGGATEVEVKERKDRVDDAMHATRAAVEEGIVPGGGVALLRASEQLKRIKTANDDQKTGVEIVRKALSAPARQIAINAGEDGSIIVGKILEKEQYSYGFDSQTGEYVNLISKGIIDPTKVVRAAIQNAASVAALLITTEAMVAELPKKNAAAPAMPGGGMGGMDF.

ATP-binding positions include Thr-30–Pro-33, Lys-51, Asp-87–Thr-91, Gly-415, and Asp-496.

Belongs to the chaperonin (HSP60) family. As to quaternary structure, forms a cylinder of 14 subunits composed of two heptameric rings stacked back-to-back. Interacts with the co-chaperonin GroES.

Its subcellular location is the cytoplasm. It carries out the reaction ATP + H2O + a folded polypeptide = ADP + phosphate + an unfolded polypeptide.. Its function is as follows. Together with its co-chaperonin GroES, plays an essential role in assisting protein folding. The GroEL-GroES system forms a nano-cage that allows encapsulation of the non-native substrate proteins and provides a physical environment optimized to promote and accelerate protein folding. This chain is Chaperonin GroEL 1, found in Nitrobacter hamburgensis (strain DSM 10229 / NCIMB 13809 / X14).